A 315-amino-acid polypeptide reads, in one-letter code: Protein MFI (315 aa).

Can homodimerize. Interacts with MFF; the interaction inhibits MFF interaction with DNM1L. As to expression, enriched in the pancreatic beta cell and the testis and is expressed at low levels in other tissues tested.

It localises to the cytoplasm. It is found in the cytosol. The protein localises to the mitochondrion outer membrane. Its function is as follows. Acts as an inhibitor of mitochondrial fission. Interacts with MFF and prevents DNM1L recruitment to mitochondria, promoting a more fused mitochondrial network. This is Protein MFI from Mus musculus (Mouse).